Here is a 387-residue protein sequence, read N- to C-terminus: 3-ketoacyl-CoA thiolase (387 aa).

Catalysis depends on cysteine 91, which acts as the Acyl-thioester intermediate. Active-site proton acceptor residues include histidine 343 and cysteine 373.

It belongs to the thiolase-like superfamily. Thiolase family. As to quaternary structure, heterotetramer of two alpha chains (FadB) and two beta chains (FadA).

It is found in the cytoplasm. It catalyses the reaction an acyl-CoA + acetyl-CoA = a 3-oxoacyl-CoA + CoA. It functions in the pathway lipid metabolism; fatty acid beta-oxidation. In terms of biological role, catalyzes the final step of fatty acid oxidation in which acetyl-CoA is released and the CoA ester of a fatty acid two carbons shorter is formed. The protein is 3-ketoacyl-CoA thiolase of Cronobacter sakazakii (strain ATCC BAA-894) (Enterobacter sakazakii).